We begin with the raw amino-acid sequence, 353 residues long: MENGGRPSVGQVILLTTSSAITALFYSIYRHKYRSVQTLKEAKKFCLTDDLPAVLSDLPGKCVPYAVIEGAVTSVKEVLNSQYVENCKGVIQRLSLKEHKMVWNRTTHLWNDHEKIIHQRSNTVPFDLAPENPGESGVSVRVLRPLEAVDLGLETIYEKFHPAVQSFSNILGHYMTGERPKGVQETEEMLKIGATITGVGELVLDNKTIKLQPPKDGMLFYLSSMDYEGLLEKQEVQMRWWRILSIVFGVASCITLFFILRRKYRHYKEKQHLKNLQREFEESRARQRVQQEPQNKEEVQNPCSICLSTEKSCVFLECGHVCSCISCYQALPSPKKCPICRNFIDRIVPLYNS.

Residues 1–8 are Cytoplasmic-facing; the sequence is MENGGRPS. A helical transmembrane segment spans residues 9–29; the sequence is VGQVILLTTSSAITALFYSIY. Topologically, residues 30-239 are mitochondrial intermembrane; sequence RHKYRSVQTL…LLEKQEVQMR (210 aa). The helical transmembrane segment at 240-260 threads the bilayer; sequence WWRILSIVFGVASCITLFFIL. Residues 261 to 353 are Cytoplasmic-facing; it reads RRKYRHYKEK…IDRIVPLYNS (93 aa). The RING-type zinc finger occupies 303–341; it reads CSICLSTEKSCVFLECGHVCSCISCYQALPSPKKCPICR.

Homooligomer.

It localises to the mitochondrion outer membrane. It catalyses the reaction S-ubiquitinyl-[E2 ubiquitin-conjugating enzyme]-L-cysteine + [acceptor protein]-L-lysine = [E2 ubiquitin-conjugating enzyme]-L-cysteine + N(6)-ubiquitinyl-[acceptor protein]-L-lysine.. Its pathway is protein modification; protein ubiquitination. E3 ubiquitin-protein ligase that plays a role in the control of mitochondrial morphology. Promotes mitochondrial fragmentation and influences mitochondrial localization. Inhibits cell growth. E3 ubiquitin ligases accept ubiquitin from an E2 ubiquitin-conjugating enzyme in the form of a thioester and then directly transfer the ubiquitin to targeted substrates. In Xenopus laevis (African clawed frog), this protein is Mitochondrial ubiquitin ligase activator of nfkb 1 (mul1).